Consider the following 205-residue polypeptide: Guanylate kinase (205 aa).

Residues 6–185 (GLLIVLSRPS…ACDRIKAIVV (180 aa)) form the Guanylate kinase-like domain. 13 to 20 (RPSGVGKG) lines the ATP pocket.

Belongs to the guanylate kinase family.

The protein localises to the cytoplasm. It carries out the reaction GMP + ATP = GDP + ADP. Functionally, essential for recycling GMP and indirectly, cGMP. The polypeptide is Guanylate kinase (Bacillus cereus (strain ATCC 14579 / DSM 31 / CCUG 7414 / JCM 2152 / NBRC 15305 / NCIMB 9373 / NCTC 2599 / NRRL B-3711)).